We begin with the raw amino-acid sequence, 316 residues long: Methionyl-tRNA formyltransferase (316 aa).

112 to 115 (SLLP) is a (6S)-5,6,7,8-tetrahydrofolate binding site.

It belongs to the Fmt family.

It carries out the reaction L-methionyl-tRNA(fMet) + (6R)-10-formyltetrahydrofolate = N-formyl-L-methionyl-tRNA(fMet) + (6S)-5,6,7,8-tetrahydrofolate + H(+). Its function is as follows. Attaches a formyl group to the free amino group of methionyl-tRNA(fMet). The formyl group appears to play a dual role in the initiator identity of N-formylmethionyl-tRNA by promoting its recognition by IF2 and preventing the misappropriation of this tRNA by the elongation apparatus. The chain is Methionyl-tRNA formyltransferase from Actinobacillus pleuropneumoniae serotype 5b (strain L20).